The primary structure comprises 45 residues: Turripeptide OL11-like (45 aa).

3 disulfides stabilise this stretch: cysteine 1–cysteine 31, cysteine 5–cysteine 24, and cysteine 13–cysteine 45. The Kazal-like domain maps to 1-45; it reads CMTICTMEYWPVCGSDGKTYPNKCHLTSTACTSQKDITVLHEGKC.

Belongs to the conopeptide P-like superfamily. Expressed by the venom duct.

The protein localises to the secreted. Acts as a neurotoxin by inhibiting an ion channel. May also act as a serine protease inhibitor, since it possess the kazal serine protease inhibitor signature. The chain is Turripeptide OL11-like from Lophiotoma albina (Sea snail).